A 130-amino-acid chain; its full sequence is Small ribosomal subunit protein uS9 (130 aa).

This sequence belongs to the universal ribosomal protein uS9 family.

This Photorhabdus laumondii subsp. laumondii (strain DSM 15139 / CIP 105565 / TT01) (Photorhabdus luminescens subsp. laumondii) protein is Small ribosomal subunit protein uS9.